A 364-amino-acid chain; its full sequence is Mannose-1-phosphate guanyltransferase (364 aa).

This sequence belongs to the transferase hexapeptide repeat family.

Its subcellular location is the cytoplasm. The catalysed reaction is alpha-D-mannose 1-phosphate + GTP + H(+) = GDP-alpha-D-mannose + diphosphate. The protein operates within nucleotide-sugar biosynthesis; GDP-alpha-D-mannose biosynthesis; GDP-alpha-D-mannose from alpha-D-mannose 1-phosphate (GTP route): step 1/1. Involved in cell wall synthesis where it is required for glycosylation. Involved in cell cycle progression through cell-size checkpoint. This chain is Mannose-1-phosphate guanyltransferase (mpg1), found in Aspergillus fumigatus (strain ATCC MYA-4609 / CBS 101355 / FGSC A1100 / Af293) (Neosartorya fumigata).